Reading from the N-terminus, the 548-residue chain is MAAKDVKFGNDARIKMLEGVNVLADAVKVTLGPKGRNVVLDKSFGAPTITKDGVSVAREIELEDKFQNMGAQMVKEVASQANDAAGDGTTTATVLAQAIITEGLKAVAAGMNPMDLKRGIDKAVVAAVEELKALSVPCADTKAIAQVGTISANSDSTVGNLIAEAMDKVGRDGVITVEEGQALQDELDVVEGMQFDRGYLSPYFVNNQEAGSVDLESPFILLVDKKVSNIRELLPTLEAVAKASRPLLIIAEDVEGEALATLVVNNMRGIVKVAAVKAPGFGDRRKAMLQDIAVLTAGSVISEEIGLELEKVVLEDLGQAKRVTITKETTTIIDGSGEETIIQGRVSQIRQQIEDATSDYDKEKLQERVAKLAGGVAVIKVGAATEVEMKEKKDRVEDALHATRAAVEEGVVAGGGVALIRVASKVAGLVGDNEEQNVGIRVALRAMEAPIRQITKNAGEEDSVVANNVKAGEGSYGYNAATGEYGDMIEMGILDPTKVTRSALQFAASVAGLMITTEAMVTDKPQDSGSAMPDMGGMGGMGGMGGMM.

ATP contacts are provided by residues 30 to 33 (TLGP), Lys51, 87 to 91 (DGTTT), Gly415, 479 to 481 (NAA), and Asp495.

It belongs to the chaperonin (HSP60) family. In terms of assembly, forms a cylinder of 14 subunits composed of two heptameric rings stacked back-to-back. Interacts with the co-chaperonin GroES.

Its subcellular location is the cytoplasm. It catalyses the reaction ATP + H2O + a folded polypeptide = ADP + phosphate + an unfolded polypeptide.. Functionally, together with its co-chaperonin GroES, plays an essential role in assisting protein folding. The GroEL-GroES system forms a nano-cage that allows encapsulation of the non-native substrate proteins and provides a physical environment optimized to promote and accelerate protein folding. The chain is Chaperonin GroEL from Aliivibrio fischeri (strain MJ11) (Vibrio fischeri).